The sequence spans 240 residues: HTH-type transcriptional regulator Mce2R (240 aa).

The 69-residue stretch at Arg-9–Phe-77 folds into the HTH gntR-type domain. Residues Glu-37–Lys-56 constitute a DNA-binding region (H-T-H motif).

Functionally, negatively regulates the expression of its operon as well as expression of end (endonuclease 4). The polypeptide is HTH-type transcriptional regulator Mce2R (mce2R) (Mycobacterium tuberculosis (strain CDC 1551 / Oshkosh)).